The sequence spans 359 residues: CMP-N-acetylneuraminate-poly-alpha-2,8-sialyltransferase (359 aa).

The Cytoplasmic portion of the chain corresponds to 1 to 7 (MRSIRKR). The helical; Signal-anchor for type II membrane protein transmembrane segment at 8–20 (WTICTISLLLIFY) threads the bilayer. Residues 21–359 (KTKEIARTEE…KLTTGKCMKQ (339 aa)) are Lumenal-facing. Asn-50, Asn-74, and Asn-119 each carry an N-linked (GlcNAc...) asparagine glycan. 2 disulfides stabilise this stretch: Cys-142–Cys-292 and Cys-156–Cys-356. Residues Asn-147 and Asn-170 each coordinate CMP-N-acetyl-beta-neuraminate. Residues Asn-204 and Asn-219 are each glycosylated (N-linked (GlcNAc...) asparagine). CMP-N-acetyl-beta-neuraminate-binding residues include Ser-279, Thr-280, Gly-281, and Trp-301. His-331 (proton donor/acceptor) is an active-site residue.

This sequence belongs to the glycosyltransferase 29 family. Autopolysialylated.

It localises to the golgi apparatus membrane. Its subcellular location is the secreted. The catalysed reaction is [N-acetyl-alpha-D-neuraminosyl-(2-&gt;8)](n) + CMP-N-acetyl-beta-neuraminate = [N-acetyl-alpha-D-neuraminosyl-(2-&gt;8)](n+1) + CMP + H(+). The protein operates within protein modification; protein glycosylation. Its function is as follows. Catalyzes the transfer of a sialic acid from a CMP-linked sialic acid donor onto a terminal alpha-2,3-, alpha-2,6-, or alpha-2,8-linked sialic acid of an N-linked glycan protein acceptor through alpha-2,8-linkages. Therefore, participates in polysialic acid synthesis on various sialylated N-acetyllactosaminyl oligosaccharides, including NCAM1 N-glycans, FETUB N-glycans and AHSG. It is noteworthy that alpha-2,3-linked sialic acid is apparently a better acceptor than alpha-2,6-linked sialic acid. This Cricetulus griseus (Chinese hamster) protein is CMP-N-acetylneuraminate-poly-alpha-2,8-sialyltransferase.